Reading from the N-terminus, the 976-residue chain is Leucine--tRNA ligase (976 aa).

Residues 1-23 (MTESPTTTPGSTSGAPSGVPSGV) show a composition bias toward low complexity. Residues 1–34 (MTESPTTTPGSTSGAPSGVPSGVNDAESDAPRHR) are disordered. A 'HIGH' region motif is present at residues 86–97 (PYPSGEGLHVGH). Positions 745–749 (KIGKS) match the 'KMSKS' region motif. Lysine 748 serves as a coordination point for ATP.

The protein belongs to the class-I aminoacyl-tRNA synthetase family.

It is found in the cytoplasm. It carries out the reaction tRNA(Leu) + L-leucine + ATP = L-leucyl-tRNA(Leu) + AMP + diphosphate. In Mycobacterium ulcerans (strain Agy99), this protein is Leucine--tRNA ligase.